The primary structure comprises 376 residues: MPISYNKASVVVSLQSIIANYRRIRTVAQRPMPVIKSDAYGHGLEAVGMALEAEGARECAVGTVGEGAKLRKAGFGADIVALLGALDREDAQLAASSGIIPTVLDIAGLERLAAQGTTERPVRVALKFDTGMARLGFTEHDVSALCERLRTLPSVRPVMAVSHLAVADDPTQSAFTMAQGAAFARIMAGLRSNFPDIMGSLSNSAATLAHPQLHWDVQRPGIALYGSNPLRGTALARHGEGLLPAMSVSVPVLQVHPLPAGRSISYGRTYTATKDATVAIIAAGYADNYSRALSGRGVAVAGGRRVPVLGRVCMQTTAIDVTDVPGIATGDRVWLLGGPGPATVSADELADLWGTISYEVLCLLGMNPRRHDDSVE.

Catalysis depends on Lys36, which acts as the Proton acceptor; specific for D-alanine. At Lys36 the chain carries N6-(pyridoxal phosphate)lysine. Arg134 contributes to the substrate binding site. Tyr266 functions as the Proton acceptor; specific for L-alanine in the catalytic mechanism. Met314 contributes to the substrate binding site.

Belongs to the alanine racemase family. Pyridoxal 5'-phosphate is required as a cofactor.

It carries out the reaction L-alanine = D-alanine. The protein operates within amino-acid biosynthesis; D-alanine biosynthesis; D-alanine from L-alanine: step 1/1. Functionally, catalyzes the interconversion of L-alanine and D-alanine. May also act on other amino acids. This is Alanine racemase (alr) from Nitratidesulfovibrio vulgaris (strain DP4) (Desulfovibrio vulgaris).